Consider the following 310-residue polypeptide: GMP synthase [glutamine-hydrolyzing] subunit B (310 aa).

The GMPS ATP-PPase domain occupies 1–187; that stretch reads MSFSDYISRI…LGLPTDIQPF (187 aa). Position 27 to 33 (27 to 33) interacts with ATP; the sequence is SGGQDSS.

As to quaternary structure, heterodimer composed of a glutamine amidotransferase subunit (A) and a GMP-binding subunit (B).

The catalysed reaction is XMP + L-glutamine + ATP + H2O = GMP + L-glutamate + AMP + diphosphate + 2 H(+). It participates in purine metabolism; GMP biosynthesis; GMP from XMP (L-Gln route): step 1/1. Its function is as follows. Catalyzes the synthesis of GMP from XMP. This Thermoplasma volcanium (strain ATCC 51530 / DSM 4299 / JCM 9571 / NBRC 15438 / GSS1) protein is GMP synthase [glutamine-hydrolyzing] subunit B (guaAB).